The following is a 59-amino-acid chain: Large ribosomal subunit protein bL35 (59 aa).

The span at G17–K43 shows a compositional bias: basic residues. The tract at residues G17–V47 is disordered.

It belongs to the bacterial ribosomal protein bL35 family.

The protein is Large ribosomal subunit protein bL35 of Mycoplasma genitalium (strain ATCC 33530 / DSM 19775 / NCTC 10195 / G37) (Mycoplasmoides genitalium).